The chain runs to 323 residues: DNA-directed RNA polymerase subunit alpha (323 aa).

An alpha N-terminal domain (alpha-NTD) region spans residues 1–233 (MGQEKVTVST…DLFIPFFHAE (233 aa)). Residues 264–323 (IALKYIYIDQSELPPRVYNCLKRSNINTFLELLNNSQEELMKIQDFRIEDVKHILDVLEI) are alpha C-terminal domain (alpha-CTD).

Belongs to the RNA polymerase alpha chain family. As to quaternary structure, in plastids the minimal PEP RNA polymerase catalytic core is composed of four subunits: alpha, beta, beta', and beta''. When a (nuclear-encoded) sigma factor is associated with the core the holoenzyme is formed, which can initiate transcription.

The protein resides in the plastid. It is found in the chloroplast. The catalysed reaction is RNA(n) + a ribonucleoside 5'-triphosphate = RNA(n+1) + diphosphate. In terms of biological role, DNA-dependent RNA polymerase catalyzes the transcription of DNA into RNA using the four ribonucleoside triphosphates as substrates. The sequence is that of DNA-directed RNA polymerase subunit alpha from Morus indica (Mulberry).